We begin with the raw amino-acid sequence, 322 residues long: GTP 3',8-cyclase (322 aa).

A Radical SAM core domain is found at 5-217; the sequence is SYGRVVDYLR…DIISKKYNIK (213 aa). Arginine 14 is a binding site for GTP. Cysteine 21 and cysteine 25 together coordinate [4Fe-4S] cluster. Tyrosine 27 provides a ligand contact to S-adenosyl-L-methionine. [4Fe-4S] cluster is bound at residue cysteine 28. Arginine 64 lines the GTP pocket. Glycine 68 is an S-adenosyl-L-methionine binding site. Position 95 (threonine 95) interacts with GTP. Serine 119 contributes to the S-adenosyl-L-methionine binding site. Position 155 (lysine 155) interacts with GTP. Methionine 189 is a binding site for S-adenosyl-L-methionine. Residues cysteine 249 and cysteine 252 each coordinate [4Fe-4S] cluster. 254–256 is a GTP binding site; that stretch reads RLR. Cysteine 266 contributes to the [4Fe-4S] cluster binding site.

This sequence belongs to the radical SAM superfamily. MoaA family. In terms of assembly, monomer and homodimer. [4Fe-4S] cluster is required as a cofactor.

It catalyses the reaction GTP + AH2 + S-adenosyl-L-methionine = (8S)-3',8-cyclo-7,8-dihydroguanosine 5'-triphosphate + 5'-deoxyadenosine + L-methionine + A + H(+). It functions in the pathway cofactor biosynthesis; molybdopterin biosynthesis. In terms of biological role, catalyzes the cyclization of GTP to (8S)-3',8-cyclo-7,8-dihydroguanosine 5'-triphosphate. This is GTP 3',8-cyclase from Campylobacter fetus subsp. fetus (strain 82-40).